The following is a 180-amino-acid chain: Cytidylate kinase 2 (180 aa).

7–15 (GKSGCGNTT) is an ATP binding site.

Belongs to the cytidylate kinase family. Type 2 subfamily.

It localises to the cytoplasm. It catalyses the reaction CMP + ATP = CDP + ADP. The enzyme catalyses dCMP + ATP = dCDP + ADP. In Borreliella burgdorferi (strain ATCC 35210 / DSM 4680 / CIP 102532 / B31) (Borrelia burgdorferi), this protein is Cytidylate kinase 2 (cmk2).